A 220-amino-acid polypeptide reads, in one-letter code: Probable septum site-determining protein MinC (220 aa).

The protein belongs to the MinC family. As to quaternary structure, interacts with MinD and FtsZ.

In terms of biological role, cell division inhibitor that blocks the formation of polar Z ring septums. Rapidly oscillates between the poles of the cell to destabilize FtsZ filaments that have formed before they mature into polar Z rings. Prevents FtsZ polymerization. This Vibrio atlanticus (strain LGP32) (Vibrio splendidus (strain Mel32)) protein is Probable septum site-determining protein MinC.